A 261-amino-acid chain; its full sequence is MASPDWGYDGENGPEHWCKLHPIANGNNQSPIDIKTSETKRDPSLKPLSISYNPATAKEIVNVGHSFHVNFEDSDNRSVLKGGPLPESYRLRQFHFHWGSTDDCGSEHLVDGATFSAELHLVHWNSAKYPSFADAASQADGLVVVGVLMKVGQANPNLQKVLDALKTVKTKNKKAPFTNFDPSVLLPSCPDYWAYFGSLTHPPLHESVTWIIFKETISVSAEQLAQFRSLLANAEGDKEVCIKQNYRPPQPLKGRTVKASF.

At A2 the chain carries N-acetylalanine. One can recognise an Alpha-carbonic anhydrase domain in the interval 4–261 (PDWGYDGENG…LKGRTVKASF (258 aa)). Residues 22–41 (PIANGNNQSPIDIKTSETKR) form a disordered region. The active-site Proton donor/acceptor is the H65. Positions 95, 97, and 120 each coordinate Zn(2+). Residues T200 and 200–201 (TH) contribute to the substrate site.

Belongs to the alpha-carbonic anhydrase family. It depends on Zn(2+) as a cofactor.

It localises to the cytoplasm. It carries out the reaction hydrogencarbonate + H(+) = CO2 + H2O. It catalyses the reaction urea = cyanamide + H2O. Its activity is regulated as follows. Inhibited by acetazolamide. Its function is as follows. Catalyzes the reversible hydration of carbon dioxide. Can hydrate cyanamide to urea. This chain is Carbonic anhydrase 1 (CA1), found in Ovis aries (Sheep).